The sequence spans 100 residues: Urease subunit gamma (100 aa).

It belongs to the urease gamma subunit family. Heterotrimer of UreA (gamma), UreB (beta) and UreC (alpha) subunits. Three heterotrimers associate to form the active enzyme.

The protein localises to the cytoplasm. It carries out the reaction urea + 2 H2O + H(+) = hydrogencarbonate + 2 NH4(+). It functions in the pathway nitrogen metabolism; urea degradation; CO(2) and NH(3) from urea (urease route): step 1/1. The protein is Urease subunit gamma of Prochlorococcus marinus (strain NATL1A).